The chain runs to 147 residues: Arginine repressor (147 aa).

Belongs to the ArgR family.

It localises to the cytoplasm. Its pathway is amino-acid biosynthesis; L-arginine biosynthesis [regulation]. Regulates arginine biosynthesis genes. This is Arginine repressor from Chlamydia caviae (strain ATCC VR-813 / DSM 19441 / 03DC25 / GPIC) (Chlamydophila caviae).